A 210-amino-acid polypeptide reads, in one-letter code: Ribonuclease HII (210 aa).

The region spanning 2–203 is the RNase H type-2 domain; it reads SGVMGIDEAG…YKRVESEVKQ (202 aa). 3 residues coordinate a divalent metal cation: aspartate 8, glutamate 9, and aspartate 99.

Belongs to the RNase HII family. The cofactor is Mn(2+). Mg(2+) serves as cofactor.

It localises to the cytoplasm. The catalysed reaction is Endonucleolytic cleavage to 5'-phosphomonoester.. Its function is as follows. Endonuclease that specifically degrades the RNA of RNA-DNA hybrids. In Methanopyrus kandleri (strain AV19 / DSM 6324 / JCM 9639 / NBRC 100938), this protein is Ribonuclease HII.